The chain runs to 164 residues: UPF0262 protein Saro_0143 (164 aa).

It belongs to the UPF0262 family.

The chain is UPF0262 protein Saro_0143 from Novosphingobium aromaticivorans (strain ATCC 700278 / DSM 12444 / CCUG 56034 / CIP 105152 / NBRC 16084 / F199).